We begin with the raw amino-acid sequence, 1433 residues long: DNA-directed RNA polymerase subunit beta' (1433 aa).

Residues Cys-66, Cys-68, Cys-81, and Cys-84 each coordinate Zn(2+). The Mg(2+) site is built by Asp-473, Asp-475, and Asp-477. Zn(2+) contacts are provided by Cys-815, Cys-889, Cys-896, and Cys-899.

The protein belongs to the RNA polymerase beta' chain family. In terms of assembly, the RNAP catalytic core consists of 2 alpha, 1 beta, 1 beta' and 1 omega subunit. When a sigma factor is associated with the core the holoenzyme is formed, which can initiate transcription. The cofactor is Mg(2+). Zn(2+) is required as a cofactor.

It catalyses the reaction RNA(n) + a ribonucleoside 5'-triphosphate = RNA(n+1) + diphosphate. DNA-dependent RNA polymerase catalyzes the transcription of DNA into RNA using the four ribonucleoside triphosphates as substrates. In Porphyromonas gingivalis (strain ATCC BAA-308 / W83), this protein is DNA-directed RNA polymerase subunit beta'.